The sequence spans 173 residues: Peptide methionine sulfoxide reductase MsrA (173 aa).

The active site involves C10.

Belongs to the MsrA Met sulfoxide reductase family.

The catalysed reaction is L-methionyl-[protein] + [thioredoxin]-disulfide + H2O = L-methionyl-(S)-S-oxide-[protein] + [thioredoxin]-dithiol. It carries out the reaction [thioredoxin]-disulfide + L-methionine + H2O = L-methionine (S)-S-oxide + [thioredoxin]-dithiol. Its function is as follows. Has an important function as a repair enzyme for proteins that have been inactivated by oxidation. Catalyzes the reversible oxidation-reduction of methionine sulfoxide in proteins to methionine. The sequence is that of Peptide methionine sulfoxide reductase MsrA from Nautilia profundicola (strain ATCC BAA-1463 / DSM 18972 / AmH).